Here is a 207-residue protein sequence, read N- to C-terminus: dTTP/UTP pyrophosphatase (207 aa).

Asp68 serves as the catalytic Proton acceptor.

This sequence belongs to the Maf family. YhdE subfamily. It depends on a divalent metal cation as a cofactor.

The protein resides in the cytoplasm. It catalyses the reaction dTTP + H2O = dTMP + diphosphate + H(+). The enzyme catalyses UTP + H2O = UMP + diphosphate + H(+). In terms of biological role, nucleoside triphosphate pyrophosphatase that hydrolyzes dTTP and UTP. May have a dual role in cell division arrest and in preventing the incorporation of modified nucleotides into cellular nucleic acids. The polypeptide is dTTP/UTP pyrophosphatase (Staphylothermus marinus (strain ATCC 43588 / DSM 3639 / JCM 9404 / F1)).